The chain runs to 406 residues: Cysteine desulfurase (406 aa).

Lysine 226 is modified (N6-(pyridoxal phosphate)lysine). The active-site Cysteine persulfide intermediate is the cysteine 364.

It belongs to the class-V pyridoxal-phosphate-dependent aminotransferase family. Csd subfamily. In terms of assembly, homodimer. Interacts with SufE and the SufBCD complex composed of SufB, SufC and SufD. The interaction with SufE is required to mediate the direct transfer of the sulfur atom from the S-sulfanylcysteine. Pyridoxal 5'-phosphate serves as cofactor.

It localises to the cytoplasm. The catalysed reaction is (sulfur carrier)-H + L-cysteine = (sulfur carrier)-SH + L-alanine. The enzyme catalyses L-selenocysteine + AH2 = hydrogenselenide + L-alanine + A + H(+). Its pathway is cofactor biosynthesis; iron-sulfur cluster biosynthesis. In terms of biological role, cysteine desulfurases mobilize the sulfur from L-cysteine to yield L-alanine, an essential step in sulfur metabolism for biosynthesis of a variety of sulfur-containing biomolecules. Component of the suf operon, which is activated and required under specific conditions such as oxidative stress and iron limitation. Acts as a potent selenocysteine lyase in vitro, that mobilizes selenium from L-selenocysteine. Selenocysteine lyase activity is however unsure in vivo. This chain is Cysteine desulfurase, found in Escherichia coli O45:K1 (strain S88 / ExPEC).